A 508-amino-acid polypeptide reads, in one-letter code: Steroid 17-alpha-hydroxylase/17,20 lyase (508 aa).

N202 lines the substrate pocket. C442 serves as a coordination point for heme.

The protein belongs to the cytochrome P450 family. It depends on heme as a cofactor.

It localises to the endoplasmic reticulum membrane. It is found in the microsome membrane. It carries out the reaction a C21-steroid + reduced [NADPH--hemoprotein reductase] + O2 = a 17alpha-hydroxy-C21-steroid + oxidized [NADPH--hemoprotein reductase] + H2O + H(+). The catalysed reaction is progesterone + reduced [NADPH--hemoprotein reductase] + O2 = 17alpha-hydroxyprogesterone + oxidized [NADPH--hemoprotein reductase] + H2O + H(+). It catalyses the reaction pregnenolone + reduced [NADPH--hemoprotein reductase] + O2 = 17alpha-hydroxypregnenolone + oxidized [NADPH--hemoprotein reductase] + H2O + H(+). The enzyme catalyses 17alpha-hydroxypregnenolone + reduced [NADPH--hemoprotein reductase] + O2 = 3beta-hydroxyandrost-5-en-17-one + acetate + oxidized [NADPH--hemoprotein reductase] + H2O + 2 H(+). It participates in steroid hormone biosynthesis. The protein operates within steroid biosynthesis; glucocorticoid biosynthesis. Regulated predominantly by intracellular cAMP levels. The 17,20-lyase activity is stimulated by cytochrome b5, which acts as an allosteric effector increasing the Vmax of the lyase activity. A cytochrome P450 monooxygenase involved in corticoid and androgen biosynthesis. Catalyzes 17-alpha hydroxylation of C21 steroids, which is common for both pathways. A second oxidative step, required only for androgen synthesis, involves an acyl-carbon cleavage. Hydroxylates pregnenolone to form 17-alpha pregnenolone, followed by the cleavage of the C17-C20 bond to form dehydroepiandrosterone (DHEA). Has 17-alpha hydroxylase activity toward progesterone. The 17-alpha hydroxy intermediates, as part of adrenal glucocorticoids biosynthesis pathway, are precursors of cortisol. Mechanistically, uses molecular oxygen inserting one oxygen atom into a substrate, and reducing the second into a water molecule, with two electrons provided by NADPH via cytochrome P450 reductase (CPR; NADPH-ferrihemoprotein reductase). This Papio hamadryas ursinus (Chacma baboon) protein is Steroid 17-alpha-hydroxylase/17,20 lyase (CYP17A1).